The primary structure comprises 667 residues: Endogenous retrovirus group K member 5 Gag polyprotein (667 aa).

G2 is lipidated: N-myristoyl glycine. The tract at residues 166 to 188 (KGPELVGPSESKPRGPSPLPAGQ) is disordered. 2 consecutive CCHC-type zinc fingers follow at residues 543-560 (KKCY…SCPV) and 580-597 (GLCP…QCHS). A disordered region spans residues 598 to 667 (KFDKDGQPLS…CPAPQQAAPQ (70 aa)). Residues 648–667 (GVSQLQQSNSCPAPQQAAPQ) are compositionally biased toward polar residues.

The protein belongs to the beta type-B retroviral Gag protein family. HERV class-II K(HML-2) gag subfamily. Myristoylation is essential for retroviral assembly. Alteration of the glycine residue leads to a block in the budding of particles and an accumulation of Gag inside the cell. In terms of processing, specific enzymatic cleavages may yield mature proteins.

The protein resides in the cell membrane. The products of the Gag polyproteins of infectious retroviruses perform highly complex orchestrated tasks during the assembly, budding, maturation, and infection stages of the viral replication cycle. During viral assembly, the proteins form membrane associations and self-associations that ultimately result in budding of an immature virion from the infected cell. Gag precursors also function during viral assembly to selectively bind and package two plus strands of genomic RNA. Endogenous Gag proteins may have kept, lost or modified their original function during evolution. The polypeptide is Endogenous retrovirus group K member 5 Gag polyprotein (ERVK-5) (Homo sapiens (Human)).